A 384-amino-acid chain; its full sequence is GTPase Obg (384 aa).

In terms of domain architecture, Obg spans 1 to 159; the sequence is MKFIDEAKIE…RSLQLELKVL (159 aa). Residues 20 to 46 are disordered; sequence ATSFRREKFVPRGGPDGGDGGKGGSVW. Positions 33–43 are enriched in gly residues; that stretch reads GPDGGDGGKGG. Residues 160–348 enclose the OBG-type G domain; that stretch reads ADVGLLGMPN…LVHQINQYLI (189 aa). GTP is bound by residues 166 to 173, 191 to 195, 213 to 216, 284 to 287, and 329 to 331; these read GMPNAGKS, FTTLH, DIPG, NKLD, and SAL. 2 residues coordinate Mg(2+): serine 173 and threonine 193. The interval 364–384 is disordered; sequence ATNVEIAEQQPKTDTGVFKPE.

It belongs to the TRAFAC class OBG-HflX-like GTPase superfamily. OBG GTPase family. As to quaternary structure, monomer. Requires Mg(2+) as cofactor.

Its subcellular location is the cytoplasm. Functionally, an essential GTPase which binds GTP, GDP and possibly (p)ppGpp with moderate affinity, with high nucleotide exchange rates and a fairly low GTP hydrolysis rate. Plays a role in control of the cell cycle, stress response, ribosome biogenesis and in those bacteria that undergo differentiation, in morphogenesis control. The chain is GTPase Obg from Neisseria meningitidis serogroup A / serotype 4A (strain DSM 15465 / Z2491).